The chain runs to 435 residues: Eukaryotic peptide chain release factor subunit 1 (435 aa).

It belongs to the eukaryotic release factor 1 family. As to quaternary structure, heterodimer of two subunits, one of which binds GTP.

Its subcellular location is the cytoplasm. In terms of biological role, directs the termination of nascent peptide synthesis (translation) in response to the termination codons UAA, UAG and UGA. This chain is Eukaryotic peptide chain release factor subunit 1 (SU2), found in Podospora anserina (Pleurage anserina).